The following is a 393-amino-acid chain: Cobalt-precorrin-5B C(1)-methyltransferase (393 aa).

Positions 1–35 (MSDETRVGEAAEQAATPEKIRKGSARRERGNRTGF) are disordered. Residues 18-31 (EKIRKGSARRERGN) show a composition bias toward basic and acidic residues.

It belongs to the CbiD family.

It carries out the reaction Co-precorrin-5B + S-adenosyl-L-methionine = Co-precorrin-6A + S-adenosyl-L-homocysteine. The protein operates within cofactor biosynthesis; adenosylcobalamin biosynthesis; cob(II)yrinate a,c-diamide from sirohydrochlorin (anaerobic route): step 6/10. Functionally, catalyzes the methylation of C-1 in cobalt-precorrin-5B to form cobalt-precorrin-6A. This chain is Cobalt-precorrin-5B C(1)-methyltransferase, found in Dechloromonas aromatica (strain RCB).